Consider the following 485-residue polypeptide: Terminase, large subunit (485 aa).

ADP-binding positions include 17–22 (KPHHVQ), 40–45 (QSGKSE), and arginine 79. The tract at residues 22–197 (QLAIHRSTAK…EFFLMGWRGG (176 aa)) is ATPase activity. Residues glutamine 97 and glutamine 99 each coordinate ATP. Residues 125–131 (SEFRGKS) carry the Walker A motif motif. The Walker B motif signature appears at 145–150 (FVILDE). The active-site For ATPase activity is the glutamate 150. The tract at residues 256 to 438 (SNSVFSGLDM…DIVMSLALAY (183 aa)) is nuclease. Positions 294, 347, and 429 each coordinate Mg(2+).

It belongs to the Tequatrovirus large terminase family. In terms of assembly, interacts with the terminase small subunit; the active complex is composed of a pentamer of terminase large subunits and a dodecamer of terminase small subunits. Interacts with the portal protein. The cofactor is Mg(2+).

Functionally, the terminase large subunit acts as an ATP driven molecular motor necessary for viral DNA translocation into empty capsids and as an endonuclease that cuts the viral genome to initiate and to end a packaging reaction The terminase lies at a unique vertex of the procapsid and is composed of two subunits, a small terminase subunit involved in viral DNA recognition (packaging sequence), and a large terminase subunit possessing endonucleolytic and ATPase activities. Both terminase subunits heterooligomerize and are docked on the portal protein to form the packaging machine. The terminase large subunit exhibits endonuclease activity and cleaves the viral genome concatemer. Once the capsid is packaged with the DNA, the terminase complex is substituted by the tail. This Thermus thermophilus (Thermus thermophilus phage P23-45) protein is Terminase, large subunit.